The primary structure comprises 103 residues: NADH-quinone oxidoreductase subunit K (103 aa).

3 helical membrane-spanning segments follow: residues 5–25 (VPTSYYLALSGVLFALGLIGV), 32–52 (ILIFLSVELMLNAANIALVAF), and 66–86 (FIVMTLAAAEVAIGLAIIVAI).

The protein belongs to the complex I subunit 4L family. NDH-1 is composed of 15 different subunits. Subunits NuoA, H, J, K, L, M, N constitute the membrane sector of the complex.

It is found in the cell membrane. It catalyses the reaction a quinone + NADH + 5 H(+)(in) = a quinol + NAD(+) + 4 H(+)(out). Functionally, NDH-1 shuttles electrons from NADH, via FMN and iron-sulfur (Fe-S) centers, to quinones in the respiratory chain. The immediate electron acceptor for the enzyme in this species is believed to be a menaquinone. Couples the redox reaction to proton translocation (for every two electrons transferred, four hydrogen ions are translocated across the cytoplasmic membrane), and thus conserves the redox energy in a proton gradient. The polypeptide is NADH-quinone oxidoreductase subunit K (Deinococcus radiodurans (strain ATCC 13939 / DSM 20539 / JCM 16871 / CCUG 27074 / LMG 4051 / NBRC 15346 / NCIMB 9279 / VKM B-1422 / R1)).